The chain runs to 553 residues: Serine protease 53 (553 aa).

A signal peptide spans 1–23; the sequence is MKWCWGPVLLIAGATVLMEGLQA. 2 consecutive Peptidase S1 domains span residues 24–273 and 294–526; these read AQRA…ARVQ and VACG…SLDW. The tract at residues 27–46 is disordered; the sequence is ACGQRGPGPPKPQEGNTVPG. C62 and C78 are oxidised to a cystine. Residues H77 and D128 each act as charge relay system in the active site. Cystine bridges form between C158–C230, C187–C209, C220–C249, and C326–C342. Active-site charge relay system residues include S224, H341, and D382. 2 disulfide bridges follow: C444-C464 and C474-C502. S478 acts as the Charge relay system in catalysis.

It belongs to the peptidase S1 family. As to expression, predominantly detected in testis, liver, heart and ovary, as well as in several tumor cell lines.

It localises to the secreted. In vitro can degrade the fibrinogen alpha chain of as well as pro-urokinase-type plasminogen activator. This chain is Serine protease 53 (PRSS53), found in Homo sapiens (Human).